A 179-amino-acid chain; its full sequence is Replication restart protein DnaT (179 aa).

The span at 151–168 (SRSSNGGMPQRDINSVSE) shows a compositional bias: polar residues. The disordered stretch occupies residues 151–179 (SRSSNGGMPQRDINSVSEPDNHIPPGFRG).

Belongs to the DnaT family. As to quaternary structure, homooligomerizes. Interacts with PriB. Component of the replication restart primosome. Primosome assembly occurs via a 'hand-off' mechanism. PriA binds to replication forks, subsequently PriB then DnaT bind; DnaT then displaces ssDNA to generate the helicase loading substrate.

Its function is as follows. Involved in the restart of stalled replication forks, which reloads the replicative helicase on sites other than the origin of replication. Can function in multiple replication restart pathways. Displaces ssDNA from a PriB-ssDNA complex. Probably forms a spiral filament on ssDNA. This is Replication restart protein DnaT from Salmonella schwarzengrund (strain CVM19633).